The sequence spans 634 residues: Poly(ribitol-phosphate) beta-glucosyltransferase (634 aa).

This sequence belongs to the glycosyltransferase 2 family.

The enzyme catalyses 4-O-[(D-ribitylphospho)(n)-D-ribitylphospho-(2R)-glycerylphospho]-N-acetyl-beta-D-mannosaminyl-(1-&gt;4)-N-acetyl-alpha-D-glucosaminyl di-trans,octa-cis-undecaprenyl diphosphate + n UDP-alpha-D-glucose = 4-O-[(2-beta-D-glucosyl-D-ribitylphospho)(n)-D-ribitylphospho-(2R)-glycerylphospho]-N-acetyl-beta-D-mannosaminyl-(1-&gt;4)-N-acetyl-alpha-D-glucosaminyl di-trans,octa-cis-undecaprenyl diphosphate + n UDP + n H(+). It functions in the pathway cell wall biogenesis; poly(ribitol phosphate) teichoic acid biosynthesis. Its function is as follows. Attaches glucose residues to poly(RboP)-wall teichoic acids (WTAs). This Bacillus spizizenii (strain ATCC 23059 / NRRL B-14472 / W23) (Bacillus subtilis subsp. spizizenii) protein is Poly(ribitol-phosphate) beta-glucosyltransferase.